The sequence spans 322 residues: NADH-quinone oxidoreductase subunit H (322 aa).

The next 8 helical transmembrane spans lie at 12–32, 79–99, 111–131, 151–171, 183–203, 234–254, 262–282, and 301–321; these read IGKA…MSFI, IFVL…AVVP, VGLL…LFAG, LSYE…TGSF, LWNV…GVAV, FFVG…TLFF, LPPF…FILL, and VCLP…LMNA.

The protein belongs to the complex I subunit 1 family. In terms of assembly, NDH-1 is composed of 14 different subunits. Subunits NuoA, H, J, K, L, M, N constitute the membrane sector of the complex.

It localises to the cell inner membrane. The catalysed reaction is a quinone + NADH + 5 H(+)(in) = a quinol + NAD(+) + 4 H(+)(out). In terms of biological role, NDH-1 shuttles electrons from NADH, via FMN and iron-sulfur (Fe-S) centers, to quinones in the respiratory chain. The immediate electron acceptor for the enzyme in this species is believed to be ubiquinone. Couples the redox reaction to proton translocation (for every two electrons transferred, four hydrogen ions are translocated across the cytoplasmic membrane), and thus conserves the redox energy in a proton gradient. This subunit may bind ubiquinone. This Aeromonas hydrophila subsp. hydrophila (strain ATCC 7966 / DSM 30187 / BCRC 13018 / CCUG 14551 / JCM 1027 / KCTC 2358 / NCIMB 9240 / NCTC 8049) protein is NADH-quinone oxidoreductase subunit H.